The sequence spans 173 residues: Plasmolipin (173 aa).

Residues 1 to 34 (MADFPGKVSTQTSSQEPQRSFAISSSVDMGFIKS) are Cytoplasmic-facing. The MARVEL domain maps to 31-160 (FIKSIPGILL…SSYFAYLGWR (130 aa)). A helical membrane pass occupies residues 35–55 (IPGILLIAEIVVGLLVWTLIA). The Extracellular portion of the chain corresponds to 56–67 (STPHYLIPALGW). The helical transmembrane segment at 68–88 (VLFVSITLWLLSIALLVILLL) threads the bilayer. The Cytoplasmic portion of the chain corresponds to 89–98 (SLHQRLPSVP). The chain crosses the membrane as a helical span at residues 99–119 (WPLVLLVFYSVAALLYLTAFL). Topologically, residues 120–138 (ANAATVPGGYYQGHLGASA) are extracellular. A helical transmembrane segment spans residues 139–159 (FFGIVETLLYTASSYFAYLGW). Over 160–173 (RGEGQNAAGSTVPV) the chain is Cytoplasmic.

Belongs to the MAL family. As to quaternary structure, forms oligomers. As to expression, expressed in the posterior midgut.

The protein resides in the cell membrane. It is found in the myelin membrane. The protein localises to the apical cell membrane. Its subcellular location is the recycling endosome membrane. It localises to the vesicle. Main component of the myelin sheath that plays an important role in myelin membrane biogenesis and myelination. Plays an essential function in apical endocytosis. Plays an important role by activating the Notch signaling pathway, which is essential for cell differentiation and results in correct patterning of the intestinal epithelium, particularly of the posterior gut absorptive cells. In Danio rerio (Zebrafish), this protein is Plasmolipin (pllp).